The following is a 922-amino-acid chain: Coronin-7 (922 aa).

4 WD repeats span residues 75–115, 124–163, 166–205, and 209–253; these read CHSD…EALP, PEEL…HLTE, AHKD…QASQ, and AHEN…SALA. Residues 386–462 are disordered; it reads NPAHRPHPRF…TSPSQRSLQS (77 aa). Positions 423–456 are enriched in low complexity; sequence SEGFSSPSSLVSPSTPSSLGLSLSSTSGIGTSPS. A phosphoserine mark is found at S459 and S462. K469 participates in a covalent cross-link: Glycyl lysine isopeptide (Lys-Gly) (interchain with G-Cter in ubiquitin). WD repeat units follow at residues 539–579, 589–629, 632–671, and 725–765; these read QNGA…LKNV, GHTE…EQLR, GHQD…LPLQ, and DVAP…PFFL. The segment at 854 to 922 is disordered; it reads LQPPGMTPVS…FEGVDEDEWD (69 aa). The residue at position 874 (T874) is a Phosphothreonine. Basic and acidic residues predominate over residues 881-893; it reads LEEKSDQQKKEEL. S912 is modified (phosphoserine).

It belongs to the WD repeat coronin family. Interacts with clathrin adapter AP1 complex. This interaction takes place at Golgi membranes and not AP1-positive endosomal membranes. Interacts (when ubiquitinated at Lys-469) with EPS15. The membrane-associated form is phosphorylated on tyrosine residues. Post-translationally, ubiquitinated via 'Lys-33'-linked ubiquitin chains by the BCR(KLHL20) E3 ubiquitin ligase complex: 'Lys-33'-linked ubiquitination promotes interaction with EPS15 and facilitates actin polymerization at the trans-Golgi network, thereby facilitating post-Golgi trafficking. Deubiquitinated by ZRANB1/TRABID.

The protein resides in the golgi apparatus membrane. The protein localises to the golgi apparatus. It is found in the trans-Golgi network. Its subcellular location is the cytoplasmic vesicle. It localises to the cytoplasm. The protein resides in the cytosol. Functionally, F-actin regulator involved in anterograde Golgi to endosome transport: upon ubiquitination via 'Lys-33'-linked ubiquitin chains by the BCR(KLHL20) E3 ubiquitin ligase complex, interacts with EPS15 and localizes to the trans-Golgi network, where it promotes actin polymerization, thereby facilitating post-Golgi trafficking. May play a role in the maintenance of the Golgi apparatus morphology. The polypeptide is Coronin-7 (Coro7) (Rattus norvegicus (Rat)).